A 621-amino-acid polypeptide reads, in one-letter code: Glutathione-regulated potassium-efflux system protein KefC (621 aa).

13 helical membrane passes run 4-24 (HTLIQALIYLGAAALIVPIAV), 26-46 (LGLGSVLGYLIAGCIIGPWAL), 54-74 (AILHFAEIGVVLMLFVIGLEL), 90-110 (GALQMVACGVLIGLFCMLLGL), 114-134 (VAELIGMTLALSSTAIAMQAM), 149-169 (FAVLLFQDIAAIPLVAMIPLL), 178-198 (LMAFALSALKVAAALALVVVL), 218-237 (VFSAVALFLVFGFGLLLEEV), 238-257 (GLSMAMGAFLAGVLLASSEY), 270-290 (GLLLGLFFIGVGMSIDFGTLV), 294-314 (LRIVILLVGFLAIKMLMLWLI), 326-346 (RWFAVLLGQGSEFAFVVFGAA), and 359-379 (ALTLAVALSMAATPILLVLLT). An RCK N-terminal domain is found at 399–518 (QPRVIVAGFG…AGVEAPERET (120 aa)). The disordered stretch occupies residues 598–621 (GWQGTEEGRHTGDIADEPENKPSA).

This sequence belongs to the monovalent cation:proton antiporter 2 (CPA2) transporter (TC 2.A.37) family. KefC subfamily. Homodimer. Interacts with the regulatory subunit KefF.

The protein localises to the cell inner membrane. In terms of biological role, pore-forming subunit of a potassium efflux system that confers protection against electrophiles. Catalyzes K(+)/H(+) antiport. This chain is Glutathione-regulated potassium-efflux system protein KefC, found in Klebsiella pneumoniae subsp. pneumoniae (strain ATCC 700721 / MGH 78578).